We begin with the raw amino-acid sequence, 287 residues long: Elongation factor Ts (287 aa).

Positions 80–83 (TDFL) are involved in Mg(2+) ion dislocation from EF-Tu.

It belongs to the EF-Ts family.

Its subcellular location is the cytoplasm. Its function is as follows. Associates with the EF-Tu.GDP complex and induces the exchange of GDP to GTP. It remains bound to the aminoacyl-tRNA.EF-Tu.GTP complex up to the GTP hydrolysis stage on the ribosome. In Pseudomonas fluorescens (strain Pf0-1), this protein is Elongation factor Ts.